Consider the following 67-residue polypeptide: Large ribosomal subunit protein bL32c (67 aa).

The protein belongs to the bacterial ribosomal protein bL32 family.

It localises to the plastid. The protein localises to the chloroplast. In Chara vulgaris (Common stonewort), this protein is Large ribosomal subunit protein bL32c.